The chain runs to 376 residues: Lipoyl synthase, mitochondrial (376 aa).

Positions 102, 107, 113, 133, 137, 140, and 348 each coordinate [4Fe-4S] cluster. One can recognise a Radical SAM core domain in the interval 116–337; it reads GGEDKTATAT…EEVGGEMGFA (222 aa).

Belongs to the radical SAM superfamily. Lipoyl synthase family. Requires [4Fe-4S] cluster as cofactor.

It localises to the mitochondrion. It carries out the reaction [[Fe-S] cluster scaffold protein carrying a second [4Fe-4S](2+) cluster] + N(6)-octanoyl-L-lysyl-[protein] + 2 oxidized [2Fe-2S]-[ferredoxin] + 2 S-adenosyl-L-methionine + 4 H(+) = [[Fe-S] cluster scaffold protein] + N(6)-[(R)-dihydrolipoyl]-L-lysyl-[protein] + 4 Fe(3+) + 2 hydrogen sulfide + 2 5'-deoxyadenosine + 2 L-methionine + 2 reduced [2Fe-2S]-[ferredoxin]. The protein operates within protein modification; protein lipoylation via endogenous pathway; protein N(6)-(lipoyl)lysine from octanoyl-[acyl-carrier-protein]: step 2/2. In terms of biological role, catalyzes the radical-mediated insertion of two sulfur atoms into the C-6 and C-8 positions of the octanoyl moiety bound to the lipoyl domains of lipoate-dependent enzymes, thereby converting the octanoylated domains into lipoylated derivatives. The polypeptide is Lipoyl synthase, mitochondrial (Branchiostoma floridae (Florida lancelet)).